The chain runs to 418 residues: NADH-quinone oxidoreductase subunit D (418 aa).

The protein belongs to the complex I 49 kDa subunit family. In terms of assembly, NDH-1 is composed of 14 different subunits. Subunits NuoB, C, D, E, F, and G constitute the peripheral sector of the complex.

It is found in the cell inner membrane. It carries out the reaction a quinone + NADH + 5 H(+)(in) = a quinol + NAD(+) + 4 H(+)(out). In terms of biological role, NDH-1 shuttles electrons from NADH, via FMN and iron-sulfur (Fe-S) centers, to quinones in the respiratory chain. The immediate electron acceptor for the enzyme in this species is believed to be ubiquinone. Couples the redox reaction to proton translocation (for every two electrons transferred, four hydrogen ions are translocated across the cytoplasmic membrane), and thus conserves the redox energy in a proton gradient. This is NADH-quinone oxidoreductase subunit D from Bordetella bronchiseptica (strain ATCC BAA-588 / NCTC 13252 / RB50) (Alcaligenes bronchisepticus).